The primary structure comprises 233 residues: Ribose-5-phosphate isomerase A (233 aa).

Residues 31–34 (SGST), 87–90 (DGAD), and 100–103 (KGGG) contribute to the substrate site. The active-site Proton acceptor is Glu-109. Lys-127 is a substrate binding site.

This sequence belongs to the ribose 5-phosphate isomerase family. As to quaternary structure, homodimer.

The enzyme catalyses aldehydo-D-ribose 5-phosphate = D-ribulose 5-phosphate. The protein operates within carbohydrate degradation; pentose phosphate pathway; D-ribose 5-phosphate from D-ribulose 5-phosphate (non-oxidative stage): step 1/1. Its function is as follows. Catalyzes the reversible conversion of ribose-5-phosphate to ribulose 5-phosphate. The sequence is that of Ribose-5-phosphate isomerase A from Chlamydia caviae (strain ATCC VR-813 / DSM 19441 / 03DC25 / GPIC) (Chlamydophila caviae).